A 152-amino-acid chain; its full sequence is Ribonuclease H (152 aa).

The 142-residue stretch at 6-147 (KKNNVIAYTD…ADELANKAIA (142 aa)) folds into the RNase H type-1 domain. Residues aspartate 15, glutamate 53, aspartate 75, and aspartate 139 each coordinate Mg(2+).

Belongs to the RNase H family. In terms of assembly, monomer. Mg(2+) serves as cofactor.

Its subcellular location is the cytoplasm. It catalyses the reaction Endonucleolytic cleavage to 5'-phosphomonoester.. Endonuclease that specifically degrades the RNA of RNA-DNA hybrids. This Francisella philomiragia subsp. philomiragia (strain ATCC 25017 / CCUG 19701 / FSC 153 / O#319-036) protein is Ribonuclease H.